Here is a 231-residue protein sequence, read N- to C-terminus: Dephospho-CoA kinase (231 aa).

The 203-residue stretch at 29-231 folds into the DPCK domain; that stretch reads RVGLTGGIAS…IAGALRFDRR (203 aa). 37 to 42 is a binding site for ATP; it reads ASGKST.

This sequence belongs to the CoaE family.

The protein localises to the cytoplasm. The catalysed reaction is 3'-dephospho-CoA + ATP = ADP + CoA + H(+). Its pathway is cofactor biosynthesis; coenzyme A biosynthesis; CoA from (R)-pantothenate: step 5/5. Its function is as follows. Catalyzes the phosphorylation of the 3'-hydroxyl group of dephosphocoenzyme A to form coenzyme A. This is Dephospho-CoA kinase from Cutibacterium acnes (strain DSM 16379 / KPA171202) (Propionibacterium acnes).